The chain runs to 160 residues: Triabin (160 aa).

The signal sequence occupies residues 1–18 (MKTIIAVTIFGILTCAYA). Intrachain disulfides connect Cys24–Cys128, Cys57–Cys160, and Cys87–Cys102.

It belongs to the calycin superfamily. Triabin family. In terms of tissue distribution, expressed in salivary glands.

Its subcellular location is the secreted. Thrombin inhibitor. Forms a non-covalent complex with thrombin at a molar ratio of 1:1. Inhibits thrombin-induced platelet aggregation. Prolongs thrombin clotting time and activated partial thromboplastin time. It only minimally suppresses the amidolytic activity of thrombin. Inhibits thrombin-mediated fibrin formation in the host. Inhibits thrombin-induced endothelium-dependent relaxant and contractile responses in host blood vessels. Inhibits thrombin-induced mitogenesis in host vascular smooth muscle cells. In Meccus pallidipennis (Triatomine bug), this protein is Triabin.